The chain runs to 37 residues: Large ribosomal subunit protein bL36c (37 aa).

Belongs to the bacterial ribosomal protein bL36 family.

It is found in the plastid. Its subcellular location is the chloroplast. In Pleurastrum terricola (Filamentous green alga), this protein is Large ribosomal subunit protein bL36c.